A 294-amino-acid chain; its full sequence is Bifunctional protein FolD (294 aa).

Residues 166 to 168 (GRS), Ser191, and Ile232 contribute to the NADP(+) site.

This sequence belongs to the tetrahydrofolate dehydrogenase/cyclohydrolase family. As to quaternary structure, homodimer.

The catalysed reaction is (6R)-5,10-methylene-5,6,7,8-tetrahydrofolate + NADP(+) = (6R)-5,10-methenyltetrahydrofolate + NADPH. It catalyses the reaction (6R)-5,10-methenyltetrahydrofolate + H2O = (6R)-10-formyltetrahydrofolate + H(+). Its pathway is one-carbon metabolism; tetrahydrofolate interconversion. Functionally, catalyzes the oxidation of 5,10-methylenetetrahydrofolate to 5,10-methenyltetrahydrofolate and then the hydrolysis of 5,10-methenyltetrahydrofolate to 10-formyltetrahydrofolate. This Bradyrhizobium diazoefficiens (strain JCM 10833 / BCRC 13528 / IAM 13628 / NBRC 14792 / USDA 110) protein is Bifunctional protein FolD.